Consider the following 729-residue polypeptide: Hydroxamate siderophore receptor FhuE (729 aa).

Positions 1-36 are cleaved as a signal peptide; the sequence is MLSTQFNRDNQYQAITKPSLLAGCIALALLPSAAFA. The short motif at 42–49 is the TonB box element; sequence ETVIVEGS. The disordered stretch occupies residues 48–72; sequence GSATAPDDGENDYSVTSTSAGTKMQ. Positions 60–72 are enriched in polar residues; the sequence is YSVTSTSAGTKMQ. Positions 74–183 constitute a TBDR plug domain; it reads TQRDIPQSVT…PSAAINMVRK (110 aa). Residues R117, R142, W275, Y357, N373, and W416 each contribute to the Fe(III)-coprogen site. One can recognise a TBDR beta-barrel domain in the interval 189–729; that stretch reads EFKGDVSAEY…NFSITGTYQF (541 aa). The TonB C-terminal box motif lies at 712–729; it reads SIVYGTPRNFSITGTYQF.

The protein belongs to the TonB-dependent receptor family.

Its subcellular location is the cell outer membrane. Involved in the active transport across the outer membrane of iron complexed with linear hydroxamate siderophores coprogen, rhodotorulic acid and ferrioxamine B. Binds Fe-coprogen with high affinity, rhodotorulic acid to a lesser extent, and weakly to ferrioxamine B. Selective for planar siderophores. Does not use cyclic siderophores ferrichrome nor ferrioxamine E as substrates. The polypeptide is Hydroxamate siderophore receptor FhuE (Escherichia coli (strain K12)).